The chain runs to 290 residues: Lysine export transcriptional regulatory protein LysG (290 aa).

The HTH lysR-type domain occupies 1 to 57; the sequence is MNPIQLDTLLSIIDEGSFEGASLALSISPSAVSQRVKALEHHVGRVLVSRTQPAKAT. Positions 18–37 form a DNA-binding region, H-T-H motif; it reads FEGASLALSISPSAVSQRVK.

The protein belongs to the LysR transcriptional regulatory family.

Its function is as follows. Positively regulates the expression of the exporter LysE. Induction requires the presence of a coinducer, which is either intracellular L-lysine, L-arginine or L-citrulline. L-histidine also acts as a coinducer of lysE expression, but this amino acid is not exported by LysE. The lysEG system prevents bacteriostasis due to elevated L-lysine or L-arginine concentrations that arise during growth in the presence of peptides or in mutants possessing a deregulated biosynthesis pathway. This chain is Lysine export transcriptional regulatory protein LysG, found in Corynebacterium glutamicum (strain ATCC 13032 / DSM 20300 / JCM 1318 / BCRC 11384 / CCUG 27702 / LMG 3730 / NBRC 12168 / NCIMB 10025 / NRRL B-2784 / 534).